A 25-amino-acid chain; its full sequence is Caerin-1.9 (25 aa).

Leucine 25 bears the Leucine amide mark.

The protein belongs to the frog skin active peptide (FSAP) family. Caerin subfamily. As to expression, expressed by the skin dorsal glands.

It is found in the secreted. Antimicrobial peptide. Adopts an alpha helical conformation which can disrupt bacterial membranes. Strongly inhibits the formation of NO by neuronal nitric oxide synthase (nNOS) at micromolar concentrations. Acts by a non-competitive mechanism, probably by binding to calcium/calmodulin and as a consequence blocking calmodulin attachment to nNOS. The sequence is that of Caerin-1.9 from Ranoidea chloris (Red-eyed tree frog).